A 364-amino-acid chain; its full sequence is Nucleoporin SEH1 (364 aa).

WD repeat units follow at residues 10 to 49, 55 to 96, 111 to 152, 160 to 210, 217 to 258, and 275 to 314; these read DHKDLIHDVSYDFHGRRMATCSSDQSVKVWDKSDNGEWNC, THSG…SNDK, DSRT…NLSQ, SCKL…RKYA, TVTD…KESS, and GHNSQVWRVSWNITSTLLASSGDDGCVRLWKANYMDNWKC. The interval 326–364 is disordered; it reads NGAAGQAGTPGAAGTPGGPASQNALQAVAGRKKAQLMPG. Low complexity predominate over residues 327–338; the sequence is GAAGQAGTPGAA. The segment covering 355–364 has biased composition (basic residues); that stretch reads GRKKAQLMPG.

It belongs to the WD repeat SEC13 family. As to quaternary structure, component of the Nup107-160 subcomplex of the nuclear pore complex (NPC). The Nup107-160 subcomplex includes NUP160, NUP133, NUP107, NUP98, NUP85, NUP43, NUP37, SEH1 and SEC13. Component of the GATOR2 subcomplex, composed of MIOS, SEC13, SEH1L, WDR24 and WDR59. The GATOR2 complex interacts with CASTOR1 and CASTOR2; the interaction is negatively regulated by arginine. The GATOR2 complex interacts with SESN1, SESN2 and SESN3; the interaction is negatively regulated by amino acids.

The protein localises to the chromosome. Its subcellular location is the centromere. It localises to the kinetochore. It is found in the nucleus. The protein resides in the nuclear pore complex. The protein localises to the lysosome membrane. Its activity is regulated as follows. The GATOR2 complex is negatively regulated by the upstream amino acid sensors CASTOR1 and SESN2, which sequester the GATOR2 complex in absence of amino acids. In the presence of abundant amino acids, GATOR2 is released from CASTOR1 and SESN2 and activated. Component of the Nup107-160 subcomplex of the nuclear pore complex (NPC). The Nup107-160 subcomplex is required for the assembly of a functional NPC. The Nup107-160 subcomplex is also required for normal kinetochore microtubule attachment, mitotic progression and chromosome segregation. This subunit plays a role in recruitment of the Nup107-160 subcomplex to the kinetochore. In terms of biological role, as a component of the GATOR2 complex, functions as an activator of the amino acid-sensing branch of the mTORC1 signaling pathway. The GATOR2 complex indirectly activates mTORC1 through the inhibition of the GATOR1 subcomplex. GATOR2 probably acts as an E3 ubiquitin-protein ligase toward GATOR1. In the presence of abundant amino acids, the GATOR2 complex mediates ubiquitination of the NPRL2 core component of the GATOR1 complex, leading to GATOR1 inactivation. In the absence of amino acids, GATOR2 is inhibited, activating the GATOR1 complex. This is Nucleoporin SEH1 (seh1l) from Osmerus mordax (Rainbow smelt).